The sequence spans 379 residues: GDSL esterase/lipase EXL2 (379 aa).

A signal peptide spans 1–35; it reads MKRNSINIHHVTSFSSSPFWCVFFLVLLCKTSTNA. The N-linked (GlcNAc...) asparagine glycan is linked to N42. Catalysis depends on S54, which acts as the Nucleophile. Active-site residues include D358 and H361.

The protein belongs to the 'GDSL' lipolytic enzyme family.

It is found in the secreted. This chain is GDSL esterase/lipase EXL2 (EXL2), found in Arabidopsis thaliana (Mouse-ear cress).